Consider the following 379-residue polypeptide: Cytochrome b (379 aa).

The next 4 membrane-spanning stretches (helical) occupy residues 33 to 53 (FGSL…FLAM), 77 to 98 (WLIR…YLHI), 113 to 133 (WNIG…GYVL), and 178 to 198 (FFAF…IHLL). The heme b site is built by His83 and His97. The heme b site is built by His182 and His196. His201 serves as a coordination point for a ubiquinone. 4 helical membrane passes run 226–246 (YKDL…ALFY), 288–308 (LGGV…PILH), 320–340 (ASQL…WIGG), and 347–367 (YIII…VLNP).

This sequence belongs to the cytochrome b family. In terms of assembly, the cytochrome bc1 complex contains 3 respiratory subunits (MT-CYB, CYC1 and UQCRFS1), 2 core proteins (UQCRC1 and UQCRC2) and probably 6 low-molecular weight proteins. Heme b is required as a cofactor.

It localises to the mitochondrion inner membrane. Component of the ubiquinol-cytochrome c reductase complex (complex III or cytochrome b-c1 complex) that is part of the mitochondrial respiratory chain. The b-c1 complex mediates electron transfer from ubiquinol to cytochrome c. Contributes to the generation of a proton gradient across the mitochondrial membrane that is then used for ATP synthesis. The sequence is that of Cytochrome b (mt-cyb) from Anguilla dieffenbachii (New Zealand longfin eel).